Reading from the N-terminus, the 1755-residue chain is Transposon Ty1-ML2 Gag-Pol polyprotein (1755 aa).

Low complexity predominate over residues Met1–Ser16. Disordered stretches follow at residues Met1–Gln93, Pro126–Pro173, and Gly352–Thr421. Composition is skewed to polar residues over residues Thr48–Ser60 and Gln127–Phe152. The segment covering Thr153–Thr165 has biased composition (low complexity). The RNA-binding stretch occupies residues Asn299–His401. A compositionally biased stretch (low complexity) spans Asn402–Ser418. A Phosphoserine modification is found at Ser416. Asp461 functions as the For protease activity; shared with dimeric partner in the catalytic mechanism. The segment at Asn583–Cys640 is integrase-type zinc finger-like. The region spanning Asn660–Pro835 is the Integrase catalytic domain. Residues Asp671 and Asp736 each contribute to the Mg(2+) site. Disordered stretches follow at residues Ser956 to Lys1087, Arg1092 to Pro1111, and Asp1130 to Ala1171. The segment covering Ser960–Thr969 has biased composition (low complexity). Residues Ser1005 to Thr1015 are compositionally biased toward polar residues. Basic and acidic residues predominate over residues Glu1038 to Ser1053. 2 stretches are compositionally biased toward polar residues: residues Tyr1054–Asp1082 and Pro1101–Pro1111. Residues Lys1178–Arg1212 carry the Bipartite nuclear localization signal motif. The region spanning Asn1338–Gln1476 is the Reverse transcriptase Ty1/copia-type domain. Mg(2+) contacts are provided by Asp1346, Asp1427, Asp1428, Asp1610, Glu1652, and Asp1685. The RNase H Ty1/copia-type domain maps to Asp1610–Lys1752.

The capsid protein forms a homotrimer, from which the VLPs are assembled. The protease is a homodimer, whose active site consists of two apposed aspartic acid residues. Initially, virus-like particles (VLPs) are composed of the structural unprocessed proteins Gag and Gag-Pol, and also contain the host initiator methionine tRNA (tRNA(i)-Met) which serves as a primer for minus-strand DNA synthesis, and a dimer of genomic Ty RNA. Processing of the polyproteins occurs within the particle and proceeds by an ordered pathway, called maturation. First, the protease (PR) is released by autocatalytic cleavage of the Gag-Pol polyprotein yielding capsid protein p45 and a Pol-p154 precursor protein. This cleavage is a prerequisite for subsequent processing of Pol-p154 at the remaining sites to release the mature structural and catalytic proteins. Maturation takes place prior to the RT reaction and is required to produce transposition-competent VLPs.

It is found in the cytoplasm. It localises to the nucleus. It carries out the reaction DNA(n) + a 2'-deoxyribonucleoside 5'-triphosphate = DNA(n+1) + diphosphate. The enzyme catalyses Endonucleolytic cleavage to 5'-phosphomonoester.. Its function is as follows. Capsid protein (CA) is the structural component of the virus-like particle (VLP), forming the shell that encapsulates the retrotransposons dimeric RNA genome. The particles are assembled from trimer-clustered units and there are holes in the capsid shells that allow for the diffusion of macromolecules. CA also has nucleocapsid-like chaperone activity, promoting primer tRNA(i)-Met annealing to the multipartite primer-binding site (PBS), dimerization of Ty1 RNA and initiation of reverse transcription. In terms of biological role, the aspartyl protease (PR) mediates the proteolytic cleavages of the Gag and Gag-Pol polyproteins after assembly of the VLP. Reverse transcriptase/ribonuclease H (RT) is a multifunctional enzyme that catalyzes the conversion of the retro-elements RNA genome into dsDNA within the VLP. The enzyme displays a DNA polymerase activity that can copy either DNA or RNA templates, and a ribonuclease H (RNase H) activity that cleaves the RNA strand of RNA-DNA heteroduplexes during plus-strand synthesis and hydrolyzes RNA primers. The conversion leads to a linear dsDNA copy of the retrotransposon that includes long terminal repeats (LTRs) at both ends. Functionally, integrase (IN) targets the VLP to the nucleus, where a subparticle preintegration complex (PIC) containing at least integrase and the newly synthesized dsDNA copy of the retrotransposon must transit the nuclear membrane. Once in the nucleus, integrase performs the integration of the dsDNA into the host genome. The protein is Transposon Ty1-ML2 Gag-Pol polyprotein (TY1B-ML2) of Saccharomyces cerevisiae (strain ATCC 204508 / S288c) (Baker's yeast).